A 518-amino-acid polypeptide reads, in one-letter code: Xylose import ATP-binding protein XylG (518 aa).

ABC transporter domains lie at 6–245 (LQMN…VGRE) and 262–507 (FEAR…LSQP). 38 to 45 (GENGAGKS) is a binding site for ATP.

The protein belongs to the ABC transporter superfamily. Xylose importer (TC 3.A.1.2.4) family. In terms of assembly, the complex is composed of two ATP-binding proteins (XylG), two transmembrane proteins (XylH) and a solute-binding protein (XylF).

Its subcellular location is the cell inner membrane. The enzyme catalyses D-xylose(out) + ATP + H2O = D-xylose(in) + ADP + phosphate + H(+). In terms of biological role, part of the ABC transporter complex XylFGH involved in xylose import. Responsible for energy coupling to the transport system. The sequence is that of Xylose import ATP-binding protein XylG from Pseudomonas fluorescens (strain Pf0-1).